Reading from the N-terminus, the 311-residue chain is Glycerol-3-phosphate dehydrogenase [NAD(P)+] (311 aa).

NADPH contacts are provided by tryptophan 11, arginine 30, arginine 31, and lysine 95. Residues lysine 95, glycine 123, and serine 125 each coordinate sn-glycerol 3-phosphate. Position 127 (alanine 127) interacts with NADPH. 5 residues coordinate sn-glycerol 3-phosphate: lysine 177, aspartate 230, serine 240, arginine 241, and asparagine 242. The Proton acceptor role is filled by lysine 177. Residue arginine 241 coordinates NADPH. Positions 265 and 267 each coordinate NADPH.

Belongs to the NAD-dependent glycerol-3-phosphate dehydrogenase family.

It is found in the cytoplasm. It catalyses the reaction sn-glycerol 3-phosphate + NAD(+) = dihydroxyacetone phosphate + NADH + H(+). It carries out the reaction sn-glycerol 3-phosphate + NADP(+) = dihydroxyacetone phosphate + NADPH + H(+). It functions in the pathway membrane lipid metabolism; glycerophospholipid metabolism. Catalyzes the reduction of the glycolytic intermediate dihydroxyacetone phosphate (DHAP) to sn-glycerol 3-phosphate (G3P), the key precursor for phospholipid synthesis. This is Glycerol-3-phosphate dehydrogenase [NAD(P)+] from Bartonella bacilliformis (strain ATCC 35685 / KC583 / Herrer 020/F12,63).